A 104-amino-acid chain; its full sequence is Large ribosomal subunit protein uL24 (104 aa).

It belongs to the universal ribosomal protein uL24 family. As to quaternary structure, part of the 50S ribosomal subunit.

Functionally, one of two assembly initiator proteins, it binds directly to the 5'-end of the 23S rRNA, where it nucleates assembly of the 50S subunit. In terms of biological role, one of the proteins that surrounds the polypeptide exit tunnel on the outside of the subunit. This chain is Large ribosomal subunit protein uL24, found in Shewanella baltica (strain OS223).